A 281-amino-acid chain; its full sequence is Bis(5'-nucleosyl)-tetraphosphatase, symmetrical (281 aa).

The protein belongs to the Ap4A hydrolase family.

The catalysed reaction is P(1),P(4)-bis(5'-adenosyl) tetraphosphate + H2O = 2 ADP + 2 H(+). In terms of biological role, hydrolyzes diadenosine 5',5'''-P1,P4-tetraphosphate to yield ADP. In Delftia acidovorans (strain DSM 14801 / SPH-1), this protein is Bis(5'-nucleosyl)-tetraphosphatase, symmetrical.